A 299-amino-acid polypeptide reads, in one-letter code: Syntenin-1 (299 aa).

Ser2 is modified (N-acetylserine). Residues 2-103 are interaction with PDCD6IP; sequence SLYPSLEDLK…VAPVTGNDAG (102 aa). 3 consecutive short sequence motifs (LYPX(n)L motif) follow at residues 3–7, 46–50, and 50–54; these read LYPSL, LYPKL, and LYPEL. Ser6 is subject to Phosphoserine. Tyr47 bears the Phosphotyrosine mark. PDZ domains lie at 115 to 194 and 199 to 273; these read EVIL…IRDR and TVTM…IMPT. 251-252 contributes to the a 1,2-diacyl-sn-glycero-3-phospho-(1D-myo-inositol-4,5-bisphosphate) binding site; sequence KD.

As to quaternary structure, monomer and homodimer. Interacts with SDC1, SDC2, SDC3, SDC4, NRXN2, EPHA7, EPHB1, NF2 isoform 1, TGFA, IL5RA, NFASC, SDCBP2 and PTPRJ. Interacts with PDCD6IP. Forms a complex with PDCD6IP and SDC2. Interacts (via C-terminus) with TGFBR1. Binds to FZD7; this interaction is increased by inositol trisphosphate (IP3). Interacts with SMO. Phosphorylated on tyrosine residues.

Its subcellular location is the cell junction. The protein resides in the focal adhesion. It is found in the adherens junction. The protein localises to the cell membrane. It localises to the endoplasmic reticulum membrane. Its subcellular location is the nucleus. The protein resides in the melanosome. It is found in the cytoplasm. The protein localises to the cytosol. It localises to the cytoskeleton. Its subcellular location is the secreted. The protein resides in the extracellular exosome. It is found in the membrane raft. Multifunctional adapter protein involved in diverse array of functions including trafficking of transmembrane proteins, neuro and immunomodulation, exosome biogenesis, and tumorigenesis. Positively regulates TGFB1-mediated SMAD2/3 activation and TGFB1-induced epithelial-to-mesenchymal transition (EMT) and cell migration in various cell types. May increase TGFB1 signaling by enhancing cell-surface expression of TGFR1 by preventing the interaction between TGFR1 and CAV1 and subsequent CAV1-dependent internalization and degradation of TGFR1. In concert with SDC1/4 and PDCD6IP, regulates exosome biogenesis. Regulates migration, growth, proliferation, and cell cycle progression in a variety of cancer types. In adherens junctions may function to couple syndecans to cytoskeletal proteins or signaling components. Seems to couple transcription factor SOX4 to the IL-5 receptor (IL5RA). May also play a role in vesicular trafficking. Seems to be required for the targeting of TGFA to the cell surface in the early secretory pathway. This Mus musculus (Mouse) protein is Syntenin-1 (Sdcbp).